The following is a 308-amino-acid chain: Pantothenate synthetase (308 aa).

Residue 39–46 (MGALHDGH) coordinates ATP. The active-site Proton donor is histidine 46. Glutamine 71 lines the (R)-pantoate pocket. Glutamine 71 is a binding site for beta-alanine. 157–160 (GEKD) lines the ATP pocket. A (R)-pantoate-binding site is contributed by glutamine 163. ATP is bound by residues valine 186 and 194 to 197 (MSSR). The disordered stretch occupies residues 286–308 (IETPAGTAGPDGDRQYAQSPWRN).

The protein belongs to the pantothenate synthetase family. As to quaternary structure, homodimer.

The protein localises to the cytoplasm. The enzyme catalyses (R)-pantoate + beta-alanine + ATP = (R)-pantothenate + AMP + diphosphate + H(+). It participates in cofactor biosynthesis; (R)-pantothenate biosynthesis; (R)-pantothenate from (R)-pantoate and beta-alanine: step 1/1. Functionally, catalyzes the condensation of pantoate with beta-alanine in an ATP-dependent reaction via a pantoyl-adenylate intermediate. The polypeptide is Pantothenate synthetase (Mycobacterium avium (strain 104)).